A 605-amino-acid polypeptide reads, in one-letter code: uncharacterized protein (605 aa).

The segment at 22–93 (FTEPARFYPS…KQGTAVHGAE (72 aa)) is disordered. Residues 46 to 57 (SENASSSVPSHS) are compositionally biased toward low complexity.

This is an uncharacterized protein from Treponema pallidum (strain Nichols).